The primary structure comprises 227 residues: 2,3-bisphosphoglycerate-dependent phosphoglycerate mutase (227 aa).

Substrate is bound by residues Arg-8–Asn-15, Thr-21–Gly-22, Arg-58, Glu-110–Tyr-113, Lys-121, Arg-137–Arg-138, and Gly-181–Asn-182. His-9 serves as the catalytic Tele-phosphohistidine intermediate. The active-site Proton donor/acceptor is the Glu-110.

Belongs to the phosphoglycerate mutase family. BPG-dependent PGAM subfamily.

It carries out the reaction (2R)-2-phosphoglycerate = (2R)-3-phosphoglycerate. It functions in the pathway carbohydrate degradation; glycolysis; pyruvate from D-glyceraldehyde 3-phosphate: step 3/5. Functionally, catalyzes the interconversion of 2-phosphoglycerate and 3-phosphoglycerate. This is 2,3-bisphosphoglycerate-dependent phosphoglycerate mutase from Chlamydia abortus (strain DSM 27085 / S26/3) (Chlamydophila abortus).